The chain runs to 146 residues: 3-hydroxyacyl-[acyl-carrier-protein] dehydratase FabZ (146 aa).

Residue His-49 is part of the active site.

It belongs to the thioester dehydratase family. FabZ subfamily.

It is found in the cytoplasm. The catalysed reaction is a (3R)-hydroxyacyl-[ACP] = a (2E)-enoyl-[ACP] + H2O. In terms of biological role, involved in unsaturated fatty acids biosynthesis. Catalyzes the dehydration of short chain beta-hydroxyacyl-ACPs and long chain saturated and unsaturated beta-hydroxyacyl-ACPs. The sequence is that of 3-hydroxyacyl-[acyl-carrier-protein] dehydratase FabZ from Wolbachia sp. subsp. Brugia malayi (strain TRS).